We begin with the raw amino-acid sequence, 231 residues long: Isoprenyl transferase (231 aa).

Aspartate 14 is an active-site residue. Aspartate 14 contacts Mg(2+). Substrate contacts are provided by residues 15–18 (GNGR), tryptophan 19, arginine 27, histidine 31, and 59–61 (STE). The Proton acceptor role is filled by asparagine 62. Residues tryptophan 63, arginine 65, arginine 176, and 182–184 (RIS) each bind substrate. Residue glutamate 195 coordinates Mg(2+).

The protein belongs to the UPP synthase family. In terms of assembly, homodimer. Mg(2+) serves as cofactor.

Catalyzes the condensation of isopentenyl diphosphate (IPP) with allylic pyrophosphates generating different type of terpenoids. This Aquifex pyrophilus protein is Isoprenyl transferase.